The following is a 434-amino-acid chain: tRNA dimethylallyltransferase (434 aa).

10 to 17 (GTTGAGKS) serves as a coordination point for ATP. 12 to 17 (TGAGKS) lines the substrate pocket. Interaction with substrate tRNA stretches follow at residues 35 to 38 (DSMQ) and 166 to 170 (RKIRR). Positions 211-233 (SLVLMPRLDKRVDKMLSHGLVDE) are interaction with isopentenylpyrophosphate transferase. Interaction with substrate tRNA stretches follow at residues 256-258 (QCI), 281-299 (RMKV…WIQS), and 291-298 (KSQKKWIQ). The segment at 380 to 416 (FVCEECLDKRGDPFTVIGEDAFNVHIKSRKHKTTVRR) adopts a Matrin-type zinc-finger fold.

The protein belongs to the IPP transferase family.

The protein resides in the mitochondrion. Its subcellular location is the cytoplasm. It localises to the nucleus. The catalysed reaction is adenosine(37) in tRNA + dimethylallyl diphosphate = N(6)-dimethylallyladenosine(37) in tRNA + diphosphate. Functionally, catalyzes the transfer of a dimethylallyl group onto the adenine at position 37 of both cytosolic and mitochondrial tRNAs, leading to the formation of N6-(dimethylallyl)adenosine (i(6)A). In Schizosaccharomyces pombe (strain 972 / ATCC 24843) (Fission yeast), this protein is tRNA dimethylallyltransferase (tit1).